The sequence spans 552 residues: Probable glucomannan 4-beta-mannosyltransferase 10 (552 aa).

Residues 62–82 traverse the membrane as a helical segment; that stretch reads IVPLFKCLVAFCLIISLLVFI. Aspartate 161 is an active-site residue. Residues aspartate 220 and aspartate 222 each contribute to the substrate site. The active site involves aspartate 314. A run of 4 helical transmembrane segments spans residues 393–413, 430–450, 509–529, and 530–550; these read IIVH…SVFF, ITLC…FWIL, EIMV…FGNT, and LLYL…VGFV.

It belongs to the glycosyltransferase 2 family. Plant cellulose synthase-like A subfamily.

The protein resides in the golgi apparatus membrane. The catalysed reaction is GDP-mannose + (glucomannan)n = GDP + (glucomannan)n+1.. Probable mannan synthase which consists of a 4-beta-mannosyltransferase activity on mannan using GDP-mannose. The beta-1,4-mannan product is the backbone for galactomannan synthesis by galactomannan galactosyltransferase. Galactomannan is a noncellulosic polysaccharides of plant cell wall. The polypeptide is Probable glucomannan 4-beta-mannosyltransferase 10 (Arabidopsis thaliana (Mouse-ear cress)).